The following is an 86-amino-acid chain: Large ribosomal subunit protein bL31B (86 aa).

The protein belongs to the bacterial ribosomal protein bL31 family. Type B subfamily. As to quaternary structure, part of the 50S ribosomal subunit.

The sequence is that of Large ribosomal subunit protein bL31B from Yersinia enterocolitica serotype O:8 / biotype 1B (strain NCTC 13174 / 8081).